We begin with the raw amino-acid sequence, 271 residues long: uncharacterized protein (271 aa).

Disordered regions lie at residues 50–93 (KKKT…SSSL) and 128–233 (KNNY…RKKV). Low complexity-rich tracts occupy residues 61–93 (SPTK…SSSL) and 129–165 (NNYN…NNNN). Residues 169-179 (TDKKEGEKNEN) are compositionally biased toward basic and acidic residues. 2 stretches are compositionally biased toward acidic residues: residues 180-199 (ENEN…DIIE) and 207-217 (MDEELENEQVE).

This is an uncharacterized protein from Dictyostelium discoideum (Social amoeba).